Here is a 113-residue protein sequence, read N- to C-terminus: Ig heavy chain V-III region ABE-47N (113 aa).

The Ig-like domain maps to 1–113; sequence EVKLEESGGG…YWGQGTLVTV (113 aa). Residues Cys22 and Cys98 are joined by a disulfide bond.

This Mus musculus (Mouse) protein is Ig heavy chain V-III region ABE-47N.